The following is a 217-amino-acid chain: Ribonuclease T (217 aa).

The Exonuclease domain maps to 20–195 (VVVDVETAGF…YDTEKTAELF (176 aa)). Mg(2+) is bound by residues D23, E25, H182, and D187. The active-site Proton donor/acceptor is the H182.

It belongs to the RNase T family. As to quaternary structure, homodimer. Mg(2+) is required as a cofactor.

Functionally, trims short 3' overhangs of a variety of RNA species, leaving a one or two nucleotide 3' overhang. Responsible for the end-turnover of tRNA: specifically removes the terminal AMP residue from uncharged tRNA (tRNA-C-C-A). Also appears to be involved in tRNA biosynthesis. This is Ribonuclease T from Vibrio vulnificus (strain CMCP6).